We begin with the raw amino-acid sequence, 665 residues long: Dual specificity protein phosphatase 16 (665 aa).

Residues 22-137 (GTEKVLLIDS…FSRCFPGLCE (116 aa)) form the Rhodanese domain. Lys55 is modified ((Microbial infection) N6-acetyllysine; by EIS). The Tyrosine-protein phosphatase domain maps to 158–300 (GPTRILPNLY…LLDYEKKIKN (143 aa)). Cys244 acts as the Phosphocysteine intermediate in catalysis. The segment at 321 to 368 (EPVPAVSEGGQKSETPLSPPCADSATSEAAGQRPVHPASVPSVPSVQP) is disordered. Over residues 354-368 (PVHPASVPSVPSVQP) the composition is skewed to low complexity. The residue at position 446 (Ser446) is a Phosphoserine; by MAPK1. Composition is skewed to polar residues over residues 449–458 (QELSEQTPET) and 487–499 (VRTS…QRSL). Disordered stretches follow at residues 449-505 (QELS…PLHR) and 597-665 (VRRR…IEVS). Ser501 bears the Phosphoserine mark. Over residues 602-622 (KPSDRADSRRSWHEESPFEKQ) the composition is skewed to basic and acidic residues.

It belongs to the protein-tyrosine phosphatase family. Non-receptor class dual specificity subfamily. In terms of assembly, interacts with ARRB2. Phosphorylated at Ser-446 by MAPK1/ERK2, which prevents its degradation, and thereby stabilizes it and blocks JNK MAPK activity. In terms of processing, (Microbial infection) Acetylated at Lys-55 by the M.tuberculosis Eis protein; this leads to the inhibition of JNK-dependent autophagy, phagosome maturation, and ROS (reactive oxygen species) generation for enhanced intracellular survival of M.tuberculosis.

It localises to the cytoplasm. It is found in the nucleus. Its subcellular location is the cytoplasmic vesicle. It carries out the reaction O-phospho-L-tyrosyl-[protein] + H2O = L-tyrosyl-[protein] + phosphate. It catalyses the reaction O-phospho-L-seryl-[protein] + H2O = L-seryl-[protein] + phosphate. The enzyme catalyses O-phospho-L-threonyl-[protein] + H2O = L-threonyl-[protein] + phosphate. Its function is as follows. Dual specificity protein phosphatase involved in the inactivation of MAP kinases. Dephosphorylates MAPK10 bound to ARRB2. The chain is Dual specificity protein phosphatase 16 (DUSP16) from Homo sapiens (Human).